We begin with the raw amino-acid sequence, 359 residues long: DNA polymerase IV (359 aa).

Positions 4 to 184 (IVHVDMDAFY…LPVNRIPGVG (181 aa)) constitute a UmuC domain. Mg(2+) is bound by residues aspartate 8 and aspartate 102. Glutamate 103 is an active-site residue.

Belongs to the DNA polymerase type-Y family. As to quaternary structure, monomer. The cofactor is Mg(2+).

It is found in the cytoplasm. The catalysed reaction is DNA(n) + a 2'-deoxyribonucleoside 5'-triphosphate = DNA(n+1) + diphosphate. In terms of biological role, poorly processive, error-prone DNA polymerase involved in untargeted mutagenesis. Copies undamaged DNA at stalled replication forks, which arise in vivo from mismatched or misaligned primer ends. These misaligned primers can be extended by PolIV. Exhibits no 3'-5' exonuclease (proofreading) activity. May be involved in translesional synthesis, in conjunction with the beta clamp from PolIII. In Xanthomonas campestris pv. campestris (strain 8004), this protein is DNA polymerase IV.